Reading from the N-terminus, the 257-residue chain is uncharacterized protein (257 aa).

The N-terminal stretch at 1-26 is a signal peptide; it reads MKKAFILSAAAAVGLFTFGGVQQASA. The segment at 80–135 is disordered; that stretch reads AKQSNVKVQDVQKTETAKPAQKTTEKAAADQNTASKAPATAEKTNTTTSAPSSVSA. Polar residues predominate over residues 121–134; the sequence is EKTNTTTSAPSSVS. One can recognise an SCP domain in the interval 141–254; sequence VELTNAERQK…ESGSIWTQQF (114 aa).

This is an uncharacterized protein from Bacillus subtilis (strain 168).